Here is a 940-residue protein sequence, read N- to C-terminus: Phosphoenolpyruvate carboxylase (940 aa).

Catalysis depends on residues H138 and K603.

The protein belongs to the PEPCase type 1 family. Mg(2+) is required as a cofactor.

The catalysed reaction is oxaloacetate + phosphate = phosphoenolpyruvate + hydrogencarbonate. Its function is as follows. Forms oxaloacetate, a four-carbon dicarboxylic acid source for the tricarboxylic acid cycle. The chain is Phosphoenolpyruvate carboxylase from Streptococcus thermophilus (strain ATCC BAA-491 / LMD-9).